The chain runs to 23 residues: Septenin 2c (23 aa).

As to expression, expressed in skin granular glands.

The protein resides in the secreted. Its function is as follows. May act as an antimicrobial peptide. The chain is Septenin 2c from Osteopilus septentrionalis (Cuban treefrog).